We begin with the raw amino-acid sequence, 143 residues long: Heat shock protein Hsp-16.48/Hsp-16.49 (143 aa).

Positions 35–140 (HNSFNFSDNI…SSRSIPINFV (106 aa)) constitute a sHSP domain.

The protein belongs to the small heat shock protein (HSP20) family.

The protein is Heat shock protein Hsp-16.48/Hsp-16.49 (hsp-16.48) of Caenorhabditis elegans.